Here is a 475-residue protein sequence, read N- to C-terminus: Bifunctional aspartate aminotransferase and glutamate/aspartate-prephenate aminotransferase (475 aa).

A chloroplast-targeting transit peptide spans 1 to 55 (MASQSSVAVISSAAARGESFPDSKKPIGSVRFQQPLRLSFSYCKSGNMSSRICAM). The L-aspartate site is built by Gly-107, Trp-193, and Asn-243. Residue Lys-306 is modified to N6-(pyridoxal phosphate)lysine. Arg-445 provides a ligand contact to L-aspartate.

Belongs to the class-I pyridoxal-phosphate-dependent aminotransferase family. As to quaternary structure, homodimer. It depends on pyridoxal 5'-phosphate as a cofactor.

The protein localises to the plastid. Its subcellular location is the chloroplast. It carries out the reaction L-aspartate + 2-oxoglutarate = oxaloacetate + L-glutamate. It catalyses the reaction L-arogenate + oxaloacetate = prephenate + L-aspartate. The enzyme catalyses L-arogenate + 2-oxoglutarate = prephenate + L-glutamate. Its pathway is amino-acid biosynthesis; L-phenylalanine biosynthesis; L-arogenate from prephenate (L-Asp route): step 1/1. The protein operates within amino-acid biosynthesis; L-phenylalanine biosynthesis; L-arogenate from prephenate (L-Glu route): step 1/1. Its function is as follows. Prokaryotic-type aspartate aminotransferase. Also has a prenate transaminase activity. Involved in the aromatic amino acids biosynthesis pathway via the arogenate route. Required for the transamination of prephenate into arogenate. Required for early development of the embryo. In Arabidopsis thaliana (Mouse-ear cress), this protein is Bifunctional aspartate aminotransferase and glutamate/aspartate-prephenate aminotransferase (PAT).